A 443-amino-acid polypeptide reads, in one-letter code: Chorionicgonadotropic hormone-like protein (443 aa).

Positions Arg-263–Met-286 are enriched in basic residues. The interval Arg-263 to Asp-292 is disordered.

It to mammalian CGHB.

It is found in the secreted. The protein resides in the cell wall. Functionally, cell wall protein that resembles the beta subunit of human chorionic gonadotropin. Stimulates growth and change in morphology. This Stenotrophomonas maltophilia (Pseudomonas maltophilia) protein is Chorionicgonadotropic hormone-like protein (xcg).